We begin with the raw amino-acid sequence, 379 residues long: RIB43A-like with coiled-coils protein 1 (379 aa).

The tract at residues 1-21 is disordered; the sequence is MYNINQSTDTKEAAAIEARRN. Residues 9–21 are compositionally biased toward basic and acidic residues; it reads DTKEAAAIEARRN. Coiled-coil stretches lie at residues 85-111, 161-241, and 280-304; these read ADRT…GREF, RYNL…KANL, and EQRA…QAEK.

The protein belongs to the RIB43A family. In terms of assembly, microtubule inner protein component of sperm flagellar doublet microtubules.

Its subcellular location is the cytoplasm. It is found in the cytoskeleton. The protein localises to the flagellum axoneme. The protein is RIB43A-like with coiled-coils protein 1 (RIBC1) of Macaca fascicularis (Crab-eating macaque).